The primary structure comprises 338 residues: HTH-type transcriptional regulator SyrM 1 (338 aa).

The HTH lysR-type domain maps to 35-92 (LDLNTLLALEALLEHRNVTQAARHLGLSQPSVSRALIRLRGVFNDDLLVRGSSGMVPT). The H-T-H motif DNA-binding region spans 52 to 72 (VTQAARHLGLSQPSVSRALIR).

This sequence belongs to the LysR transcriptional regulatory family.

Its function is as follows. Transcriptional activator that regulates the expression of genes involved in symbiosis. Among other targets it acts on the nolWBTUV operon. The chain is HTH-type transcriptional regulator SyrM 1 (syrM1) from Sinorhizobium fredii (strain NBRC 101917 / NGR234).